A 357-amino-acid polypeptide reads, in one-letter code: 4-hydroxy-3-methylbut-2-en-1-yl diphosphate synthase (flavodoxin) (357 aa).

4 residues coordinate [4Fe-4S] cluster: Cys-264, Cys-267, Cys-299, and Glu-306.

Belongs to the IspG family. The cofactor is [4Fe-4S] cluster.

The catalysed reaction is (2E)-4-hydroxy-3-methylbut-2-enyl diphosphate + oxidized [flavodoxin] + H2O + 2 H(+) = 2-C-methyl-D-erythritol 2,4-cyclic diphosphate + reduced [flavodoxin]. The protein operates within isoprenoid biosynthesis; isopentenyl diphosphate biosynthesis via DXP pathway; isopentenyl diphosphate from 1-deoxy-D-xylulose 5-phosphate: step 5/6. Converts 2C-methyl-D-erythritol 2,4-cyclodiphosphate (ME-2,4cPP) into 1-hydroxy-2-methyl-2-(E)-butenyl 4-diphosphate. This is 4-hydroxy-3-methylbut-2-en-1-yl diphosphate synthase (flavodoxin) from Campylobacter jejuni (strain RM1221).